Reading from the N-terminus, the 146-residue chain is Ferric uptake regulation protein 2 (146 aa).

Residues Cys96 and Cys99 each contribute to the Zn(2+) site.

It belongs to the Fur family.

It localises to the cytoplasm. Functionally, acts as a global negative controlling element, employing Fe(2+) as a cofactor to bind the operator of the repressed genes. The protein is Ferric uptake regulation protein 2 (fur2) of Mycolicibacterium fortuitum (Mycobacterium fortuitum).